A 458-amino-acid polypeptide reads, in one-letter code: uncharacterized protein (458 aa).

A TRAM domain is found at 5 to 65 (QAPVNKNDVV…KGYGFGRVLN (61 aa)). Residues Cys78, Cys84, Cys87, and Cys165 each contribute to the [4Fe-4S] cluster site. Gln289, Tyr318, Glu339, and Asp387 together coordinate S-adenosyl-L-methionine. Catalysis depends on Cys414, which acts as the Nucleophile.

This sequence belongs to the class I-like SAM-binding methyltransferase superfamily. RNA M5U methyltransferase family.

This is an uncharacterized protein from Halalkalibacterium halodurans (strain ATCC BAA-125 / DSM 18197 / FERM 7344 / JCM 9153 / C-125) (Bacillus halodurans).